Here is a 442-residue protein sequence, read N- to C-terminus: Lysosomal dipeptide transporter MFSD1 (442 aa).

A Dileucine internalization motif motif is present at residues 8-9 (LL). The next 10 membrane-spanning stretches (helical) occupy residues 38–58 (LLVL…YDNP), 85–105 (TVIF…GALV), 107–127 (AFWL…SLAV), 187–207 (LLIG…LAYL), 238–258 (LWLI…FIGL), 276–296 (AINS…GILV), 303–323 (IIWV…LAFT), 333–353 (LLGV…AFVV), 364–384 (FMQS…GMIL), and 390–410 (LFLE…VVML).

It belongs to the major facilitator superfamily. As to quaternary structure, homodimer. Interacts with lysosomal protein GLMP (via lumenal domain); the interaction starts while both proteins are still in the endoplasmic reticulum and is required for stabilization of MFSD1 in lysosomes but has no direct effect on its targeting to lysosomes or transporter activity.

Its subcellular location is the lysosome membrane. The enzyme catalyses L-alpha-aminoacyl-L-arginine(out) = L-alpha-aminoacyl-L-arginine(in). The catalysed reaction is L-arginyl-L-alpha-amino acid(out) = L-arginyl-L-alpha-amino acid(in). It carries out the reaction L-arginyl-glycine(out) = L-arginyl-glycine(in). It catalyses the reaction L-alpha-aminoacyl-L-lysine(out) = L-alpha-aminoacyl-L-lysine(in). The enzyme catalyses L-aspartyl-L-lysine(out) = L-aspartyl-L-lysine(in). The catalysed reaction is L-alanyl-L-lysine(out) = L-alanyl-L-lysine(in). It carries out the reaction L-lysyl-L-alpha-amino acid(out) = L-lysyl-L-alpha-amino acid(in). It catalyses the reaction L-lysyl-L-alanine(out) = L-lysyl-L-alanine(in). The enzyme catalyses L-lysyl-L-lysine(out) = L-lysyl-L-lysine(in). The catalysed reaction is L-lysyl-glycine(out) = L-lysyl-glycine(in). It carries out the reaction L-alpha-aminoacyl-L-histidine(out) = L-alpha-aminoacyl-L-histidine(in). It catalyses the reaction L-histidyl-L-alpha-amino acid(out) = L-histidyl-L-alpha-amino acid(in). The enzyme catalyses L-histidyl-glycine(out) = L-histidyl-glycine(in). Lysosomal dipeptide uniporter that selectively exports lysine, arginine or histidine-containing dipeptides with a net positive charge from the lysosome lumen into the cytosol. Could play a role in a specific type of protein O-glycosylation indirectly regulating macrophages migration and tissue invasion. Also essential for liver homeostasis. This chain is Lysosomal dipeptide transporter MFSD1, found in Gallus gallus (Chicken).